The chain runs to 592 residues: Aspartate--tRNA ligase (592 aa).

Residue Glu177 participates in L-aspartate binding. Residues 201 to 204 (QIFK) form an aspartate region. An L-aspartate-binding site is contributed by Arg223. ATP-binding positions include 223-225 (RDE) and Gln232. His451 is a binding site for L-aspartate. An ATP-binding site is contributed by Glu485. Arg492 contributes to the L-aspartate binding site. Residue 537–540 (GLDR) participates in ATP binding.

This sequence belongs to the class-II aminoacyl-tRNA synthetase family. Type 1 subfamily. As to quaternary structure, homodimer.

The protein resides in the cytoplasm. The catalysed reaction is tRNA(Asp) + L-aspartate + ATP = L-aspartyl-tRNA(Asp) + AMP + diphosphate. Catalyzes the attachment of L-aspartate to tRNA(Asp) in a two-step reaction: L-aspartate is first activated by ATP to form Asp-AMP and then transferred to the acceptor end of tRNA(Asp). This Bacillus licheniformis (strain ATCC 14580 / DSM 13 / JCM 2505 / CCUG 7422 / NBRC 12200 / NCIMB 9375 / NCTC 10341 / NRRL NRS-1264 / Gibson 46) protein is Aspartate--tRNA ligase.